A 378-amino-acid chain; its full sequence is Vacuolar membrane protein CAGL0J10076g (378 aa).

The interval 18-70 (RGLPRLVTTSTTPTPTTEPTTEPTTTKDETSQTSATDASTATTSTAATSTAAT) is disordered. 2 stretches are compositionally biased toward low complexity: residues 25–41 (TTSTTPTPTTEPTTEPT) and 48–70 (SQTSATDASTATTSTAATSTAAT). A helical transmembrane segment spans residues 118 to 138 (FIAVGSIAGAILMLIFLWWSI). The disordered stretch occupies residues 299–368 (NDYDTPLIPD…ARDHRKTPSM (70 aa)). Residues 321-337 (RSHRKTPSNDKYHRRNR) show a composition bias toward basic residues. Over residues 343 to 356 (SPSRSPTRTPIRTR) the composition is skewed to low complexity.

Belongs to the PRM5 family.

It localises to the vacuole membrane. In Candida glabrata (strain ATCC 2001 / BCRC 20586 / JCM 3761 / NBRC 0622 / NRRL Y-65 / CBS 138) (Yeast), this protein is Vacuolar membrane protein CAGL0J10076g.